A 669-amino-acid chain; its full sequence is Glutaminase kidney isoform, mitochondrial (669 aa).

The N-terminal 54 residues, 1–54, are a transit peptide targeting the mitochondrion; that stretch reads MMRLRGSGMLRDLLLRSPAGVSATLRRAQPLVTLCRRPRGGGRPAAGPAAAARL. The tract at residues 68–118 is disordered; it reads LARGLSSSPSEILQELGKGSTHPQPGVSPPAAPAAPGPKDGPGETDAFGNS. Residues 93–103 show a composition bias toward pro residues; that stretch reads GVSPPAAPAAP. An N6-succinyllysine mark is found at Lys-130 and Lys-164. Ser-286 serves as a coordination point for substrate. Residue Lys-311 is modified to N6-acetyllysine. Positions 315 to 322 are highly mobile activation loop; that stretch reads GLRFNKLF. 6 residues coordinate substrate: Asn-335, Glu-381, Asn-388, Tyr-414, Tyr-466, and Val-484. ANK repeat units lie at residues 585-614 and 619-648; these read DSRTALHVAAAEGHVEVVKFLLEACKVNPF and WNNTPMDEALHFGHHDVFKILQEYQVQYTP. Residues 647–669 are disordered; that stretch reads TPQGDSDNGKENQTVHKNLDGLL. Ser-652 is subject to Phosphoserine. Over residues 653 to 669 the composition is skewed to basic and acidic residues; it reads DNGKENQTVHKNLDGLL.

Belongs to the glutaminase family. In terms of assembly, homotetramer, dimer of dimers. The tetramers can assemble into rod-like oligomers (in vitro), but the physiological significance of this is not clear. Interacts with RAF1 and MAP2K2. Interacts with ATCAY; the interaction is direct and may control GLS localization, negatively regulating its activity. Post-translationally, synthesized as a 74-kDa cytosolic precursor which is proteolytically processed by the mitochondrial-processing peptidase (MPP) via a 72-kDa intermediate to yield the mature mitochondrial 68- and 65-kDa subunits. In terms of tissue distribution, isoform 1 and isoform 3 are detected in brain cortex. Isoform 3 is highly expressed in astrocytoma, ganglioglioma and ependymoma. Isoform 1 is highly expressed in brain and kidney, but not detected in liver. Isoform 3 is highly expressed in heart and pancreas, detected at lower levels in placenta, lung, pancreas and kidney, but is not detected in liver. Isoform 2 is expressed in cardiac and skeletal muscle.

The protein resides in the mitochondrion. It is found in the cytoplasm. Its subcellular location is the cytosol. It localises to the mitochondrion matrix. It carries out the reaction L-glutamine + H2O = L-glutamate + NH4(+). With respect to regulation, isoform 1 and isoform 3 are activated by phosphate. Inhibited by BPTES. BPTES binds between subunits and favors dissociation of the tetramer into dimers. Inhibited by 6-diazo-5-oxo-L-norleucine (DON). Enzyme activity is stimulated by phosphorylation. Its function is as follows. Catalyzes the first reaction in the primary pathway for the renal catabolism of glutamine. Plays a role in maintaining acid-base homeostasis. Regulates the levels of the neurotransmitter glutamate, the main excitatory neurotransmitter in the brain. In terms of biological role, lacks catalytic activity. The protein is Glutaminase kidney isoform, mitochondrial (GLS) of Homo sapiens (Human).